The following is a 547-amino-acid chain: Chaperonin GroEL (547 aa).

ATP-binding positions include 30–33, Lys-51, 87–91, Gly-415, 479–481, and Asp-495; these read TLGP, DGTTT, and NAA.

Belongs to the chaperonin (HSP60) family. Forms a cylinder of 14 subunits composed of two heptameric rings stacked back-to-back. Interacts with the co-chaperonin GroES.

Its subcellular location is the cytoplasm. It catalyses the reaction ATP + H2O + a folded polypeptide = ADP + phosphate + an unfolded polypeptide.. In terms of biological role, together with its co-chaperonin GroES, plays an essential role in assisting protein folding. The GroEL-GroES system forms a nano-cage that allows encapsulation of the non-native substrate proteins and provides a physical environment optimized to promote and accelerate protein folding. The polypeptide is Chaperonin GroEL (Polynucleobacter necessarius subsp. necessarius (strain STIR1)).